Consider the following 404-residue polypeptide: Multidrug resistance protein MdtG (404 aa).

Helical transmembrane passes span 19-39 (LGCF…PLYV), 56-76 (LVFS…GGLA), 90-110 (LGMA…QFLI), 113-133 (ALLG…ATQV), 144-164 (TLST…GLLA), 171-191 (PVFF…FFFI), 222-242 (LFVT…ILTL), 254-274 (IAFI…LSAP), 288-308 (ILIV…FVQT), 317-337 (FLLG…LVYN), and 376-396 (AVFC…WNSL).

The protein belongs to the major facilitator superfamily. DHA1 family. MdtG (TC 2.A.1.2.20) subfamily.

The protein localises to the cell inner membrane. The sequence is that of Multidrug resistance protein MdtG from Salmonella typhi.